A 185-amino-acid chain; its full sequence is Translation initiation factor IF-3 (185 aa).

It belongs to the IF-3 family. In terms of assembly, monomer.

It localises to the cytoplasm. IF-3 binds to the 30S ribosomal subunit and shifts the equilibrium between 70S ribosomes and their 50S and 30S subunits in favor of the free subunits, thus enhancing the availability of 30S subunits on which protein synthesis initiation begins. This Rickettsia felis (strain ATCC VR-1525 / URRWXCal2) (Rickettsia azadi) protein is Translation initiation factor IF-3.